A 258-amino-acid polypeptide reads, in one-letter code: Leucyl/phenylalanyl-tRNA--protein transferase (258 aa).

A disordered region spans residues Gly199–Asp220. Residues Ser209–Asp220 are compositionally biased toward low complexity.

Belongs to the L/F-transferase family.

It localises to the cytoplasm. It carries out the reaction N-terminal L-lysyl-[protein] + L-leucyl-tRNA(Leu) = N-terminal L-leucyl-L-lysyl-[protein] + tRNA(Leu) + H(+). The catalysed reaction is N-terminal L-arginyl-[protein] + L-leucyl-tRNA(Leu) = N-terminal L-leucyl-L-arginyl-[protein] + tRNA(Leu) + H(+). It catalyses the reaction L-phenylalanyl-tRNA(Phe) + an N-terminal L-alpha-aminoacyl-[protein] = an N-terminal L-phenylalanyl-L-alpha-aminoacyl-[protein] + tRNA(Phe). Functionally, functions in the N-end rule pathway of protein degradation where it conjugates Leu, Phe and, less efficiently, Met from aminoacyl-tRNAs to the N-termini of proteins containing an N-terminal arginine or lysine. The sequence is that of Leucyl/phenylalanyl-tRNA--protein transferase from Hyphomonas neptunium (strain ATCC 15444).